We begin with the raw amino-acid sequence, 396 residues long: Aspartate aminotransferase (396 aa).

Positions 34, 130, and 183 each coordinate L-aspartate. Lys-246 is modified (N6-(pyridoxal phosphate)lysine). Position 374 (Arg-374) interacts with L-aspartate.

This sequence belongs to the class-I pyridoxal-phosphate-dependent aminotransferase family. Homodimer. It depends on pyridoxal 5'-phosphate as a cofactor.

It localises to the cytoplasm. The enzyme catalyses L-aspartate + 2-oxoglutarate = oxaloacetate + L-glutamate. This Escherichia coli (strain K12) protein is Aspartate aminotransferase (aspC).